A 60-amino-acid chain; its full sequence is Large ribosomal subunit protein bL32 (60 aa).

Positions 1–16 (MAVPRRKTSPSRRGMR) are enriched in basic residues. Positions 1-60 (MAVPRRKTSPSRRGMRRSADAIKKPTYVEDKDSGELRRPHHLDLKTGMYKGRQVLKKKES) are disordered. The segment covering 17-44 (RSADAIKKPTYVEDKDSGELRRPHHLDL) has biased composition (basic and acidic residues).

The protein belongs to the bacterial ribosomal protein bL32 family.

This chain is Large ribosomal subunit protein bL32, found in Bradyrhizobium diazoefficiens (strain JCM 10833 / BCRC 13528 / IAM 13628 / NBRC 14792 / USDA 110).